The following is a 124-amino-acid chain: Small ribosomal subunit protein uS12 (124 aa).

3-methylthioaspartic acid is present on aspartate 89. The tract at residues 104-124 is disordered; the sequence is SAGVQNRNRGRSKYGTKRPKK. Positions 111–124 are enriched in basic residues; sequence NRGRSKYGTKRPKK.

This sequence belongs to the universal ribosomal protein uS12 family. As to quaternary structure, part of the 30S ribosomal subunit. Contacts proteins S8 and S17. May interact with IF1 in the 30S initiation complex.

In terms of biological role, with S4 and S5 plays an important role in translational accuracy. Its function is as follows. Interacts with and stabilizes bases of the 16S rRNA that are involved in tRNA selection in the A site and with the mRNA backbone. Located at the interface of the 30S and 50S subunits, it traverses the body of the 30S subunit contacting proteins on the other side and probably holding the rRNA structure together. The combined cluster of proteins S8, S12 and S17 appears to hold together the shoulder and platform of the 30S subunit. This is Small ribosomal subunit protein uS12 from Pelotomaculum thermopropionicum (strain DSM 13744 / JCM 10971 / SI).